A 311-amino-acid polypeptide reads, in one-letter code: Methionyl-tRNA formyltransferase (311 aa).

112–115 lines the (6S)-5,6,7,8-tetrahydrofolate pocket; that stretch reads SLLP.

This sequence belongs to the Fmt family.

The catalysed reaction is L-methionyl-tRNA(fMet) + (6R)-10-formyltetrahydrofolate = N-formyl-L-methionyl-tRNA(fMet) + (6S)-5,6,7,8-tetrahydrofolate + H(+). In terms of biological role, attaches a formyl group to the free amino group of methionyl-tRNA(fMet). The formyl group appears to play a dual role in the initiator identity of N-formylmethionyl-tRNA by promoting its recognition by IF2 and preventing the misappropriation of this tRNA by the elongation apparatus. The sequence is that of Methionyl-tRNA formyltransferase from Bradyrhizobium sp. (strain ORS 278).